Here is a 238-residue protein sequence, read N- to C-terminus: ATP synthase subunit a (238 aa).

6 consecutive transmembrane segments (helical) span residues 18–38 (TTNLISGLVSALIVFCVVFAL), 76–96 (FGLYAFTLFLFIFVSNQIGLF), 114–134 (PIVTLTLSLITMMLAHYSGVA), 150–170 (FKVWLPIGVFTEFIDFLTLGL), 188–208 (GIAFSGGIVNMIVAIPLALIW), and 211–231 (FSVFLGSIQAFVFVTLTSVYI).

It belongs to the ATPase A chain family. As to quaternary structure, F-type ATPases have 2 components, CF(1) - the catalytic core - and CF(0) - the membrane proton channel. CF(1) has five subunits: alpha(3), beta(3), gamma(1), delta(1), epsilon(1). CF(0) has three main subunits: a(1), b(2) and c(9-12). The alpha and beta chains form an alternating ring which encloses part of the gamma chain. CF(1) is attached to CF(0) by a central stalk formed by the gamma and epsilon chains, while a peripheral stalk is formed by the delta and b chains.

It localises to the cell membrane. In terms of biological role, key component of the proton channel; it plays a direct role in the translocation of protons across the membrane. In Pediococcus pentosaceus (strain ATCC 25745 / CCUG 21536 / LMG 10740 / 183-1w), this protein is ATP synthase subunit a.